Here is a 297-residue protein sequence, read N- to C-terminus: Protein muscleblind (297 aa).

2 consecutive C3H1-type zinc fingers follow at residues 18 to 46 (WLQLEVCREFQRNKCSRQDTECKFAHPPA) and 52 to 80 (NGKVTACYDSIKGRCNRDKPPCKYFHPPQ).

The protein belongs to the muscleblind family. In terms of tissue distribution, expressed in embryonic muscle cells.

It localises to the nucleus. Required for terminal differentiation of photoreceptor cells. Vital for embryonic development. This Drosophila melanogaster (Fruit fly) protein is Protein muscleblind (mbl).